Here is a 415-residue protein sequence, read N- to C-terminus: Serine hydroxymethyltransferase (415 aa).

Residues Leu-121 and 125–127 each bind (6S)-5,6,7,8-tetrahydrofolate; that span reads GHL. Position 230 is an N6-(pyridoxal phosphate)lysine (Lys-230). (6S)-5,6,7,8-tetrahydrofolate-binding positions include Glu-246 and 354-356; that span reads SPF.

It belongs to the SHMT family. Homodimer. Requires pyridoxal 5'-phosphate as cofactor.

It is found in the cytoplasm. The catalysed reaction is (6R)-5,10-methylene-5,6,7,8-tetrahydrofolate + glycine + H2O = (6S)-5,6,7,8-tetrahydrofolate + L-serine. The protein operates within one-carbon metabolism; tetrahydrofolate interconversion. It participates in amino-acid biosynthesis; glycine biosynthesis; glycine from L-serine: step 1/1. Functionally, catalyzes the reversible interconversion of serine and glycine with tetrahydrofolate (THF) serving as the one-carbon carrier. This reaction serves as the major source of one-carbon groups required for the biosynthesis of purines, thymidylate, methionine, and other important biomolecules. Also exhibits THF-independent aldolase activity toward beta-hydroxyamino acids, producing glycine and aldehydes, via a retro-aldol mechanism. The chain is Serine hydroxymethyltransferase from Bdellovibrio bacteriovorus (strain ATCC 15356 / DSM 50701 / NCIMB 9529 / HD100).